The sequence spans 80 residues: Small ribosomal subunit protein bS18 (80 aa).

This sequence belongs to the bacterial ribosomal protein bS18 family. As to quaternary structure, part of the 30S ribosomal subunit. Forms a tight heterodimer with protein bS6.

In terms of biological role, binds as a heterodimer with protein bS6 to the central domain of the 16S rRNA, where it helps stabilize the platform of the 30S subunit. The sequence is that of Small ribosomal subunit protein bS18 from Staphylococcus haemolyticus (strain JCSC1435).